A 579-amino-acid chain; its full sequence is Probable cholinesterase (579 aa).

An N-terminal signal peptide occupies residues 1 to 19 (MTDHKIIMLLLLGIYCIQA). 2 N-linked (GlcNAc...) asparagine; by host glycosylation sites follow: asparagine 77 and asparagine 144. The active-site Acyl-ester intermediate is the serine 217. Asparagine 257, asparagine 269, and asparagine 283 each carry an N-linked (GlcNAc...) asparagine; by host glycan. The active-site Charge relay system is the glutamate 337. Asparagine 373 and asparagine 394 each carry an N-linked (GlcNAc...) asparagine; by host glycan. The active-site Charge relay system is the histidine 451. An N-linked (GlcNAc...) asparagine; by host glycan is attached at asparagine 469.

Belongs to the type-B carboxylesterase/lipase family.

It catalyses the reaction an acylcholine + H2O = a carboxylate + choline + H(+). May be involved in the disruption of the host membrane. The sequence is that of Probable cholinesterase from Acanthamoeba polyphaga mimivirus (APMV).